Here is a 141-residue protein sequence, read N- to C-terminus: MAKKIIGELKLQIPAGKANPSPPVGPALGQRGVNIMEFCKAFNERTKDMGSFNIPVVLTIYQDKSFTFITKKPPVTDLIKKAAGIQKGSDNPLKNKIGKITKAQVAEIAATKMEDLNAKSTEGAIKIVEGSARSMGIEIVD.

This sequence belongs to the universal ribosomal protein uL11 family. Part of the ribosomal stalk of the 50S ribosomal subunit. Interacts with L10 and the large rRNA to form the base of the stalk. L10 forms an elongated spine to which L12 dimers bind in a sequential fashion forming a multimeric L10(L12)X complex. In terms of processing, one or more lysine residues are methylated.

Functionally, forms part of the ribosomal stalk which helps the ribosome interact with GTP-bound translation factors. The sequence is that of Large ribosomal subunit protein uL11 from Wolinella succinogenes (strain ATCC 29543 / DSM 1740 / CCUG 13145 / JCM 31913 / LMG 7466 / NCTC 11488 / FDC 602W) (Vibrio succinogenes).